We begin with the raw amino-acid sequence, 461 residues long: Probable tubulin polyglutamylase TTLL9 (461 aa).

Positions 1 to 10 are enriched in polar residues; the sequence is MSRQKSQTSK. A disordered region spans residues 1–20; it reads MSRQKSQTSKGHGASKGKER. The TTL domain occupies 22–402; that stretch reads QRTLIRFKTT…EARLTGKEKR (381 aa). ATP contacts are provided by residues lysine 149 and 155–156; that span reads QG. A protein is bound at residue glutamine 155. Residues 186-197 are compositionally biased toward polar residues; it reads QATRANVNPSGS. The tract at residues 186-208 is disordered; the sequence is QATRANVNPSGSHDTRSSDDQKD. Residues 198–208 are compositionally biased toward basic and acidic residues; it reads HDTRSSDDQKD. ATP-binding positions include 218–221 and 231–233; these read QRYV and KFD. Arginine 257 lines the L-glutamate pocket. 276-277 lines the ATP pocket; the sequence is TN. Lysine 294 is an L-glutamate binding site. Mg(2+) contacts are provided by aspartate 348, glutamate 361, and asparagine 363. Lysine 379 is a binding site for L-glutamate.

It belongs to the tubulin--tyrosine ligase family. The cofactor is Mg(2+).

It is found in the cytoplasm. The protein resides in the cytoskeleton. The protein localises to the cilium basal body. Its subcellular location is the flagellum axoneme. The catalysed reaction is (L-glutamyl)(n)-gamma-L-glutamyl-L-glutamyl-[protein] + L-glutamate + ATP = (L-glutamyl)(n+1)-gamma-L-glutamyl-L-glutamyl-[protein] + ADP + phosphate + H(+). Functionally, probable tubulin polyglutamylase that generates side chains of glutamate on the gamma-carboxyl group of specific glutamate residues within the C-terminal tail of target proteins. Similar to TTLL1, may acquire enzymatic activity only in complex with other proteins as it is most likely lacking domains important for autonomous activity. Mediates tubulin polyglutamylation which induces establishment of microtubule heterogeneity in sperm flagella, thereby playing a role in normal motile flagella axoneme structure and sperm flagella beating pattern. In Rattus norvegicus (Rat), this protein is Probable tubulin polyglutamylase TTLL9 (Ttll9).